Reading from the N-terminus, the 269-residue chain is Phycobilisome 37.5 kDa linker polypeptide, phycocyanin-associated, rod (269 aa).

In terms of domain architecture, PBS-linker spans 2–177 (TSSTAARQLG…IYRGYANSDR (176 aa)). The CpcD-like domain maps to 217 to 269 (GQLYRVRVIQADRGRTTQIRRSIQEYLVSYDQLSPTLQRLNQRGSRVVNISPA).

Belongs to the phycobilisome linker protein family.

The protein resides in the cellular thylakoid membrane. Functionally, rod linker protein, associated with phycocyanin. Linker polypeptides determine the state of aggregation and the location of the disk-shaped phycobiliprotein units within the phycobilisome and modulate their spectroscopic properties in order to mediate a directed and optimal energy transfer. The chain is Phycobilisome 37.5 kDa linker polypeptide, phycocyanin-associated, rod (cpcH2) from Microchaete diplosiphon (Fremyella diplosiphon).